The primary structure comprises 522 residues: Maturase K (522 aa).

This sequence belongs to the intron maturase 2 family. MatK subfamily.

Its subcellular location is the plastid. The protein localises to the chloroplast. Its function is as follows. Usually encoded in the trnK tRNA gene intron. Probably assists in splicing its own and other chloroplast group II introns. The protein is Maturase K of Schizorhiza neglecta (Lapeirousia neglecta).